The primary structure comprises 1167 residues: mRNA 3'-end-processing protein rna-14 (1167 aa).

The tract at residues 1–245 is disordered; it reads MSDDYDPTNI…DPTPVTQPAP (245 aa). Acidic residues-rich tracts occupy residues 16–26 and 70–79; these read EEQEDYGEADG and NTDDVGDDYD. Residues 102–111 show a composition bias toward low complexity; it reads TAPQPAAPVA. The span at 124–137 shows a compositional bias: acidic residues; the sequence is DSDDEDEDGDDDGE. Low complexity-rich tracts occupy residues 138-150 and 159-191; these read PQQQQQQQQQQQP and GSGASSSGGSAPAPASASATAAPQSHSPAPQTA. Residues 192 to 218 show a composition bias toward polar residues; it reads TLTVQDNAGATTFNAPPVPQQVSHQSG. The segment covering 219–245 has biased composition (low complexity); it reads ATTAAVPTTPSSAAPAVDPTPVTQPAP. HAT repeat units follow at residues 277–309, 311–342, 352–387, 401–434, 471–504, and 518–550; these read NDIDGARQVYERFLAIFPQAADIWVEYLDLELS, NNFPQAEGIFAKCLMTTPNVNLWTRYLDYIRR, QARQTVSQAYEFVIDNIGLDKDSGKIWAEYIQFIKF, QKMDQLRKAYQRAICVPISNVNTLWKEYDQFEMG, TNLPRLPPAPGFDGDQEFMEQVEIWKKWIAWEKS, and LYQKRILYVYNQALMALRFWPEMWVDAAQWCFD. The segment covering 882–893 has biased composition (polar residues); it reads QQQPQLPMSQRD. 2 disordered regions span residues 882-980 and 1075-1167; these read QQQP…SGAG and AYRE…PPPY. The segment covering 908–922 has biased composition (low complexity); the sequence is SPSAGPGAPFAPYAA. Over residues 924-946 the composition is skewed to basic and acidic residues; the sequence is RPLDDRDYDDHPRKIARSEHDPF. Residues 969 to 979 are compositionally biased toward gly residues; it reads GAAGAYSGSGA. Low complexity predominate over residues 1079–1090; the sequence is SPGPLGGRPLSP. The span at 1121-1134 shows a compositional bias: pro residues; that stretch reads EPPPAAQYGVPPPA. Residues 1135–1151 are compositionally biased toward low complexity; sequence QYDGGWAQQQQQQQYGQ.

It is found in the nucleus. The protein localises to the cytoplasm. Functionally, component of the cleavage factor IA (CFIA) complex, which is involved in the endonucleolytic cleavage during polyadenylation-dependent pre-mRNA 3'-end formation. The chain is mRNA 3'-end-processing protein rna-14 (rna-14) from Neurospora crassa (strain ATCC 24698 / 74-OR23-1A / CBS 708.71 / DSM 1257 / FGSC 987).